Reading from the N-terminus, the 391-residue chain is MTEEFNESMINDIKEGDKVTGEVQQVEDKQVVVHINGGKFNGIIPISQLSTHHIDSPSEVVKEGDEVEAYVTKVEFDEENETGAYILSRRQLETEKSYSYLQEKLDNNEIIEAKVTEVVKGGLVVDVGQRGFVPASLISTDFIEDFSVFDGQTIRIKVEELDPENNRVILSRKAVEQEENDAKKDQLLQSLNEGDVIHGKVARLTQFGAFIDIGGVDGLVHVSELSHEHVQTPEEVVSIGQDVKVKIKSIDRDTERISLSIKDTLPTPFENIKGQFHENDVIEGVVVRLANFGAFVEIAPGVQGLVHISEIAHKHIGTPGEVLEPGQQVNVKILGIDEENERVSLSIKATLPNEDVVESDPSTTKAYLENEEEDNPTIGDMIGDKLKNLKL.

S1 motif domains follow at residues 16 to 90, 108 to 173, 194 to 262, and 279 to 348; these read GDKV…LSRR, NEII…LSRK, GDVI…LSIK, and NDVI…LSIK.

Belongs to the bacterial ribosomal protein bS1 family.

Binds mRNA; thus facilitating recognition of the initiation point. It is needed to translate mRNA with a short Shine-Dalgarno (SD) purine-rich sequence. The chain is Small ribosomal subunit protein bS1 (rpsA) from Staphylococcus aureus (strain N315).